The primary structure comprises 1392 residues: DNA-directed RNA polymerase subunit beta (1392 aa).

Belongs to the RNA polymerase beta chain family. As to quaternary structure, the RNAP catalytic core consists of 2 alpha, 1 beta, 1 beta' and 1 omega subunit. When a sigma factor is associated with the core the holoenzyme is formed, which can initiate transcription.

The enzyme catalyses RNA(n) + a ribonucleoside 5'-triphosphate = RNA(n+1) + diphosphate. In terms of biological role, DNA-dependent RNA polymerase catalyzes the transcription of DNA into RNA using the four ribonucleoside triphosphates as substrates. The protein is DNA-directed RNA polymerase subunit beta of Neisseria gonorrhoeae (strain NCCP11945).